The sequence spans 24 residues: Alpha-lactalbumin (24 aa).

The protein belongs to the glycosyl hydrolase 22 family. In terms of assembly, lactose synthase (LS) is a heterodimer of a catalytic component, beta1,4-galactosyltransferase (beta4Gal-T1) and a regulatory component, alpha-lactalbumin (LA). Post-translationally, glycosylated (50% of the proteins). As to expression, mammary gland specific. Secreted in milk.

The protein resides in the secreted. In terms of biological role, regulatory subunit of lactose synthase, changes the substrate specificity of galactosyltransferase in the mammary gland making glucose a good acceptor substrate for this enzyme. This enables LS to synthesize lactose, the major carbohydrate component of milk. In other tissues, galactosyltransferase transfers galactose onto the N-acetylglucosamine of the oligosaccharide chains in glycoproteins. This chain is Alpha-lactalbumin (LALBA), found in Felis catus (Cat).